A 264-amino-acid chain; its full sequence is MVWLPRVPCVAAVILLLTVLSPPVALVRDSRPWFLEYCKSECHFYNGTQRVRFLKRYFYNLEENLRFDSDVGEFRAVTELGRPDAENWNSQPEILEQKRAAVDTYCRHNYEIFDNFLVRRRVEPTVTVYPTKTQPLEHHNLLVCSVSDFYPGNIEVRWFRNGKEEKTGIVSTGLVRNGDWTFQTLVMLETVPQSGEVYTCQVEHPSLTDPVTVEWKAQSTSAQNKMLSGVGGFVLGLLFLGAGLFIYFRNQKGQSGLQPTGLLS.

An N-terminal signal peptide occupies residues M1 to L26. Residues V27–R121 are beta-1. Residues V27–K225 are Extracellular-facing. Cystine bridges form between C38–C106 and C144–C200. N-linked (GlcNAc...) asparagine glycosylation is present at N46. A beta-2 region spans residues V122–K225. In terms of domain architecture, Ig-like C1-type spans P124–E214. The helical transmembrane segment at M226–I246 threads the bilayer. At Y247–S264 the chain is on the cytoplasmic side.

Belongs to the MHC class II family.

It is found in the membrane. The protein is H-2 class II histocompatibility antigen, E-Q beta chain of Mus musculus (Mouse).